The sequence spans 171 residues: Large ribosomal subunit protein uL15 (171 aa).

Over residues 1 to 10 (MKLNEISDNN) the composition is skewed to polar residues. Disordered stretches follow at residues 1–44 (MKLN…RSGV) and 150–171 (LPEAQPSEQEKKAARREANKAK). Residues 21–35 (RGIGSGKGKTAGRGQ) show a composition bias toward gly residues. Residues 157–171 (EQEKKAARREANKAK) are compositionally biased toward basic and acidic residues.

It belongs to the universal ribosomal protein uL15 family. In terms of assembly, part of the 50S ribosomal subunit.

Binds to the 23S rRNA. In Novosphingobium aromaticivorans (strain ATCC 700278 / DSM 12444 / CCUG 56034 / CIP 105152 / NBRC 16084 / F199), this protein is Large ribosomal subunit protein uL15.